Consider the following 325-residue polypeptide: Melanocortin receptor 5 (325 aa).

The Extracellular segment spans residues 1–37; sequence MNSSFHLHFLDLGLNTTDGNLSGLSVQNASSLCEDMG. 4 N-linked (GlcNAc...) asparagine glycosylation sites follow: asparagine 2, asparagine 15, asparagine 20, and asparagine 28. Residues 38–61 traverse the membrane as a helical segment; the sequence is IAVEVFLALGLISLLENILVIGAI. At 62-73 the chain is on the cytoplasmic side; the sequence is VRNRNLHTPMYF. Residues 74–97 traverse the membrane as a helical segment; sequence FVGSLAVADMLVSLSNSWETITIY. Residues 98–114 lie on the Extracellular side of the membrane; sequence LLTNKHLVMADASVRHL. A helical transmembrane segment spans residues 115 to 138; that stretch reads DNVFDSMICISVVASMCSLLAIAV. The Cytoplasmic segment spans residues 139 to 155; sequence DRYVTIFCALRYQRIMT. The helical transmembrane segment at 156-179 threads the bilayer; sequence GRRSGAIIGGIWAFCASCGTVFIV. Residues 180–186 lie on the Extracellular side of the membrane; the sequence is YYESTYV. A helical transmembrane segment spans residues 187–211; the sequence is VICLIAMFLTMLLLMASLYTHMFLL. At 212-239 the chain is on the cytoplasmic side; sequence ARTHIRRIATLPGHSSVRQRTGVKGAIT. Residues 240–265 form a helical membrane-spanning segment; sequence LAMLLGVFIVCWAPFFLHLILMISCP. The Extracellular segment spans residues 266–273; that stretch reads HNLYCSCF. The chain crosses the membrane as a helical span at residues 274–297; the sequence is MSHFNMYLILIMCNSVIDPLIYAF. Topologically, residues 298–325 are cytoplasmic; sequence RSQEMRKTFKEIVCFQSFRTPCRFPSRY. A lipid anchor (S-palmitoyl cysteine) is attached at cysteine 311.

This sequence belongs to the G-protein coupled receptor 1 family.

It is found in the cell membrane. Functionally, receptor for MSH (alpha, beta and gamma) and ACTH. The activity of this receptor is mediated by G proteins which activate adenylate cyclase. This receptor is a possible mediator of the immunomodulation properties of melanocortins. The sequence is that of Melanocortin receptor 5 (MC5R) from Bos taurus (Bovine).